Reading from the N-terminus, the 496-residue chain is Probable cytosol aminopeptidase (496 aa).

2 residues coordinate Mn(2+): lysine 266 and aspartate 271. Residue lysine 278 is part of the active site. Mn(2+) is bound by residues aspartate 290, aspartate 349, and glutamate 351. The active site involves arginine 353.

It belongs to the peptidase M17 family. The cofactor is Mn(2+).

The protein resides in the cytoplasm. It carries out the reaction Release of an N-terminal amino acid, Xaa-|-Yaa-, in which Xaa is preferably Leu, but may be other amino acids including Pro although not Arg or Lys, and Yaa may be Pro. Amino acid amides and methyl esters are also readily hydrolyzed, but rates on arylamides are exceedingly low.. The enzyme catalyses Release of an N-terminal amino acid, preferentially leucine, but not glutamic or aspartic acids.. Its function is as follows. Presumably involved in the processing and regular turnover of intracellular proteins. Catalyzes the removal of unsubstituted N-terminal amino acids from various peptides. The polypeptide is Probable cytosol aminopeptidase (Trichodesmium erythraeum (strain IMS101)).